Consider the following 273-residue polypeptide: Glutamate 5-kinase (273 aa).

An ATP-binding site is contributed by Lys15. Substrate contacts are provided by Ser55, Asp142, and Asn158. Residues 178-179 (SD) and 220-226 (TGGMLSK) contribute to the ATP site.

The protein belongs to the glutamate 5-kinase family.

It is found in the cytoplasm. It carries out the reaction L-glutamate + ATP = L-glutamyl 5-phosphate + ADP. It functions in the pathway amino-acid biosynthesis; L-proline biosynthesis; L-glutamate 5-semialdehyde from L-glutamate: step 1/2. Functionally, catalyzes the transfer of a phosphate group to glutamate to form L-glutamate 5-phosphate. This chain is Glutamate 5-kinase, found in Streptococcus pyogenes serotype M6 (strain ATCC BAA-946 / MGAS10394).